The sequence spans 381 residues: Succinyl-diaminopimelate desuccinylase (381 aa).

His68 contributes to the Zn(2+) binding site. The active site involves Asp70. Residue Asp101 participates in Zn(2+) binding. The Proton acceptor role is filled by Glu135. Zn(2+) is bound by residues Glu136, Glu164, and His350.

This sequence belongs to the peptidase M20A family. DapE subfamily. In terms of assembly, homodimer. It depends on Zn(2+) as a cofactor. Co(2+) is required as a cofactor.

The enzyme catalyses N-succinyl-(2S,6S)-2,6-diaminopimelate + H2O = (2S,6S)-2,6-diaminopimelate + succinate. Its pathway is amino-acid biosynthesis; L-lysine biosynthesis via DAP pathway; LL-2,6-diaminopimelate from (S)-tetrahydrodipicolinate (succinylase route): step 3/3. In terms of biological role, catalyzes the hydrolysis of N-succinyl-L,L-diaminopimelic acid (SDAP), forming succinate and LL-2,6-diaminopimelate (DAP), an intermediate involved in the bacterial biosynthesis of lysine and meso-diaminopimelic acid, an essential component of bacterial cell walls. This Neisseria meningitidis serogroup C / serotype 2a (strain ATCC 700532 / DSM 15464 / FAM18) protein is Succinyl-diaminopimelate desuccinylase.